Consider the following 632-residue polypeptide: Arginyl-tRNA--protein transferase 1 (632 aa).

Over residues 1–18 (MSLKNDASSSHDGGSNRE) the composition is skewed to polar residues. Disordered regions lie at residues 1-27 (MSLK…HGRR), 113-144 (KLDV…AKSE), 284-312 (NGNI…HQAR), and 517-580 (PAAS…NDIN). The segment covering 113–122 (KLDVQPREQR) has biased composition (basic and acidic residues). Polar residues predominate over residues 285-296 (GNISRGANSLDG). Positions 298–310 (ETLHAKKDSENHQ) are enriched in basic and acidic residues. Acidic residues predominate over residues 538-563 (SDEDEDEDEDDDDDDDDDEEMYETES). The segment covering 564-578 (EDSHIESDPGSKDND) has biased composition (basic and acidic residues).

It belongs to the R-transferase family.

It carries out the reaction an N-terminal L-alpha-aminoacyl-[protein] + L-arginyl-tRNA(Arg) = an N-terminal L-arginyl-L-aminoacyl-[protein] + tRNA(Arg) + H(+). In terms of biological role, involved in the post-translational conjugation of arginine to the N-terminal aspartate or glutamate of a protein. This arginylation is required for degradation of the protein via the ubiquitin pathway. Component of the N-end rule pathway with ATE2 and PRT6. The N-end rule pathway regulates seed after-ripening, seedling sugar sensitivity, seedling lipid breakdown, and abscisic acid (ABA) sensitivity of germination. The end-rule pathway regulates various aspects of leaf and shoot development. Involved in the oxygen-dependent N-arginylation of RAP2-12, an activator of hypoxic gene expression. This N-terminal modification leads to ubiquitination by PRT6 and subsequent degradation of RAP2-12 under aerobic conditions. Has an important role in the progression of leaf senescence. Involved in disease resistance. The end-rule pathway plays a role in regulating the timing and amplitude of the immune response following infection with the bacterial pathogen Pseudomonas syringae pv tomato. Regulates the biosynthesis of plant-defense metabolites such as glucosinolates, and the biosynthesis and response to the phytohormone jasmonate (JA), which plays a key role in plant immunity. The polypeptide is Arginyl-tRNA--protein transferase 1 (Arabidopsis thaliana (Mouse-ear cress)).